A 217-amino-acid chain; its full sequence is Adenylate kinase (217 aa).

Residue 11-16 (GAGKGT) participates in ATP binding. Positions 31–60 (STGDMFREAMANETPVGLEAKSYIDKGDLV) are NMP. AMP contacts are provided by residues threonine 32, arginine 37, 58–60 (DLV), 86–89 (GFPR), and glutamine 93. Residues 127 to 165 (ARYICKNCGATYNKISNPTKVEGTCDRCGGHEFFQREDD) are LID. Position 128 (arginine 128) interacts with ATP. Positions 131 and 134 each coordinate Zn(2+). Residue 137-138 (TY) coordinates ATP. Cysteine 151 and cysteine 154 together coordinate Zn(2+). Residues arginine 162 and arginine 173 each coordinate AMP. ATP is bound at residue glutamine 201.

It belongs to the adenylate kinase family. In terms of assembly, monomer.

Its subcellular location is the cytoplasm. The catalysed reaction is AMP + ATP = 2 ADP. It functions in the pathway purine metabolism; AMP biosynthesis via salvage pathway; AMP from ADP: step 1/1. Catalyzes the reversible transfer of the terminal phosphate group between ATP and AMP. Plays an important role in cellular energy homeostasis and in adenine nucleotide metabolism. The sequence is that of Adenylate kinase from Lactobacillus gasseri (strain ATCC 33323 / DSM 20243 / BCRC 14619 / CIP 102991 / JCM 1131 / KCTC 3163 / NCIMB 11718 / NCTC 13722 / AM63).